Reading from the N-terminus, the 273-residue chain is Putative pyruvate, phosphate dikinase regulatory protein (273 aa).

Position 153-160 (153-160 (GVSRTSKS)) interacts with ADP.

Belongs to the pyruvate, phosphate/water dikinase regulatory protein family. PDRP subfamily.

The catalysed reaction is N(tele)-phospho-L-histidyl/L-threonyl-[pyruvate, phosphate dikinase] + ADP = N(tele)-phospho-L-histidyl/O-phospho-L-threonyl-[pyruvate, phosphate dikinase] + AMP + H(+). It catalyses the reaction N(tele)-phospho-L-histidyl/O-phospho-L-threonyl-[pyruvate, phosphate dikinase] + phosphate + H(+) = N(tele)-phospho-L-histidyl/L-threonyl-[pyruvate, phosphate dikinase] + diphosphate. Bifunctional serine/threonine kinase and phosphorylase involved in the regulation of the pyruvate, phosphate dikinase (PPDK) by catalyzing its phosphorylation/dephosphorylation. This Ehrlichia canis (strain Jake) protein is Putative pyruvate, phosphate dikinase regulatory protein.